The chain runs to 152 residues: MKTPIELKILDSRIGTEFPLPAYATPGSAGMDLRAITDTQLVIQPGETVLIPTGIAIHVADPSLAAIILPRSGLGHKHGIVLGNLVGLIDSDYQGPLMVSCWNRGSEPFTIEIGDRLAQLVFVPVVQAEFKLVDEFNQSDRGTGGFGHSGTK.

Substrate contacts are provided by residues 71-73, Asn-84, 88-90, and Met-98; these read RSG and LID.

It belongs to the dUTPase family. Mg(2+) is required as a cofactor.

It catalyses the reaction dUTP + H2O = dUMP + diphosphate + H(+). The protein operates within pyrimidine metabolism; dUMP biosynthesis; dUMP from dCTP (dUTP route): step 2/2. Functionally, this enzyme is involved in nucleotide metabolism: it produces dUMP, the immediate precursor of thymidine nucleotides and it decreases the intracellular concentration of dUTP so that uracil cannot be incorporated into DNA. This chain is Deoxyuridine 5'-triphosphate nucleotidohydrolase, found in Shewanella halifaxensis (strain HAW-EB4).